The primary structure comprises 602 residues: RNA-binding NOB1-like protein (602 aa).

The segment at 1 to 25 is disordered; sequence MDPKPTSMWSSIVKKDPPSKPPVND. Residues 48 to 134 form the PINc domain; the sequence is VVDANAIIEG…LKLIALSYTL (87 aa). 2 disordered regions span residues 258–278 and 301–331; these read SQGQ…VSRS and IQKD…GEDI. Residues 301-329 are compositionally biased toward basic and acidic residues; sequence IQKDQEADKARHTKEANETHAKDSGKNGE. Residues 331–365 are a coiled coil; it reads ISSILKDMRLEEESLRALQEETEETNAEATLINGE. The NOB1 zinc-finger motif lies at 452–522; it reads IRQLHRWILK…QYSIPMPKGG (71 aa). Residues cysteine 462, cysteine 465, cysteine 477, and cysteine 480 each contribute to the Zn(2+) site.

It belongs to the NOB1 family. As to quaternary structure, component of the small ribosomal subunit, ribosomal RNA processing complex (SSU RRP complex). As to expression, highly expressed in flowers and siliques and at lower levels in roots, hypocotyls, stems, leaves and seeds.

It is found in the nucleus. The protein resides in the nucleoplasm. Its subcellular location is the cytoplasm. In terms of biological role, essential protein required during embryogenesis and pollen development. Endonuclease cleaving pre-rRNA at the 3' end of the mature 18S rRNA (D-site); cleaves 20S pre-rRNA in the cytoplasm. Required for processing of 20S pre-rRNA precursor and biogenesis of 40S ribosomal subunits. This is RNA-binding NOB1-like protein from Arabidopsis thaliana (Mouse-ear cress).